The primary structure comprises 861 residues: Protein argonaute-4 (861 aa).

The PAZ domain maps to 219-338 (PIIEFMCEVL…LPLEVCNIVA (120 aa)). Residues 509–820 (LIVVILPGKT…VAFRARYHLV (312 aa)) enclose the Piwi domain. Residues 825-846 (DSAEGSHVSGQSNGRDPQALAK) form a disordered region.

The protein belongs to the argonaute family. Ago subfamily. Interacts with EIF4B, IMP8, PRMT5, TNRC6A and TNRC6B. Interacts with ZFP36. In terms of processing, ubiquitinated on surface-exposed lysines by a SCF-like E3 ubiquitin-protein ligase complex containing ZSWIM8 during target-directed microRNA degradation (TDMD), a process that mediates degradation of microRNAs (miRNAs). Ubiquitination by the SCF-like E3 ubiquitin-protein ligase complex containing ZSWIM8 leads to its subsequent degradation, thereby exposing miRNAs for degradation. ZSWIM8 recognizes and binds AGO4 when it is engaged with a TDMD target.

The protein localises to the cytoplasm. Its subcellular location is the P-body. Required for RNA-mediated gene silencing (RNAi). Binds to short RNAs such as microRNAs (miRNAs) and represses the translation of mRNAs which are complementary to them. Lacks endonuclease activity and does not appear to cleave target mRNAs. Also required for RNA-directed transcription and replication of the human hapatitis delta virus (HDV). The protein is Protein argonaute-4 (AGO4) of Homo sapiens (Human).